The following is a 197-amino-acid chain: MFITFEGIDGSGKSTQIKLLARYLEKRGKRVILKREPGGTETGEKIRKLLLKEEMTPKAELFLFLASRNLLVMEIKRYLSEGYVVLLDRYTDSSVAYQGFGRNLGKEIVEKLNDFATDSLVPDLTFYIDVDVETALNRKGELNRFEKREFLERVREGYLVLAKEHPERIVVLDGKRSIEEIHRDVVREVERRWKLDV.

G7–S14 is a binding site for ATP.

Belongs to the thymidylate kinase family.

The catalysed reaction is dTMP + ATP = dTDP + ADP. In terms of biological role, phosphorylation of dTMP to form dTDP in both de novo and salvage pathways of dTTP synthesis. This is Thymidylate kinase from Thermotoga petrophila (strain ATCC BAA-488 / DSM 13995 / JCM 10881 / RKU-1).